Here is a 105-residue protein sequence, read N- to C-terminus: Large ribosomal subunit protein bL21 (105 aa).

The protein belongs to the bacterial ribosomal protein bL21 family. Part of the 50S ribosomal subunit. Contacts protein L20.

Its function is as follows. This protein binds to 23S rRNA in the presence of protein L20. This is Large ribosomal subunit protein bL21 from Rickettsia peacockii (strain Rustic).